The chain runs to 729 residues: Cellulose synthase-like protein E1 (729 aa).

The next 2 membrane-spanning stretches (helical) occupy residues 29–49 and 64–84; these read VIAYRFFSASVFVCICLIWFY and LIWFVMFIVEIWFGLYWVVTQ. Residues D152 and D443 contribute to the active site. Helical transmembrane passes span 526-546, 553-573, 644-664, 680-700, and 709-729; these read LPVLIYSVLTSLCLFKGIPLF, WFIPFGYVTVAATAYSLAEFL, MFLVLGTLGMLNLFCFAAAVA, QFVITGVLVVINWPLYKGMLL, and MSVTVKSVVLALSACTCLAFL.

Belongs to the glycosyltransferase 2 family. Plant cellulose synthase-like E subfamily.

The protein localises to the golgi apparatus membrane. Its function is as follows. Thought to be a Golgi-localized beta-glycan synthase that polymerize the backbones of noncellulosic polysaccharides (hemicelluloses) of plant cell wall. The polypeptide is Cellulose synthase-like protein E1 (CSLE1) (Arabidopsis thaliana (Mouse-ear cress)).